Reading from the N-terminus, the 109-residue chain is Cell division suppressor protein YneA (109 aa).

Residues 39-90 (SEVNVSEGDSLWALADQYAGKSDMAKADFVSWVEKENNLADGHVEAGESVVI) enclose the LysM domain.

Belongs to the YneA family.

Its subcellular location is the cytoplasm. Its function is as follows. Inhibits cell division during the SOS response. Affects a later stage of the cell division protein assembly, after the assembly of the Z ring, by probably suppressing recruitment of FtsL and/or DivIC to the division machinery. The polypeptide is Cell division suppressor protein YneA (Listeria monocytogenes serotype 4b (strain F2365)).